Consider the following 362-residue polypeptide: Aminomethyltransferase (362 aa).

The protein belongs to the GcvT family. As to quaternary structure, the glycine cleavage system is composed of four proteins: P, T, L and H.

It catalyses the reaction N(6)-[(R)-S(8)-aminomethyldihydrolipoyl]-L-lysyl-[protein] + (6S)-5,6,7,8-tetrahydrofolate = N(6)-[(R)-dihydrolipoyl]-L-lysyl-[protein] + (6R)-5,10-methylene-5,6,7,8-tetrahydrofolate + NH4(+). In terms of biological role, the glycine cleavage system catalyzes the degradation of glycine. The chain is Aminomethyltransferase from Listeria welshimeri serovar 6b (strain ATCC 35897 / DSM 20650 / CCUG 15529 / CIP 8149 / NCTC 11857 / SLCC 5334 / V8).